The primary structure comprises 259 residues: MAIHLVIIDALNLIRRVHSAQPDPTDIANTIQNTCRTLQRIISESHPTHIVAVFDHLGSDRGWRAEILPEYKQGRKPMPEPLLNGLEKIQDAWWQLGIDSLLSEGDEADDLVATLACKVAQHGEKVTIISTDKGYCQLLSPTLQIRDYFQHRWLDQPFIEQEFGVKPQQLSDYWGLTGISSSQVTGIPGIGPKAAKEILSQFDDIEQAFLSPDLPKKYRTKFDQHIELARRCKRVSALKTDIELGFNLQDLRFTANETH.

Aspartate 109 is a binding site for Mg(2+). Residues 165–255 (VKPQQLSDYW…FNLQDLRFTA (91 aa)) enclose the 5'-3' exonuclease domain. Leucine 176, isoleucine 187, and isoleucine 190 together coordinate K(+). The interval 189 to 194 (GIGPKA) is interaction with DNA.

This sequence belongs to the Xni family. Mg(2+) is required as a cofactor. The cofactor is K(+).

In terms of biological role, has flap endonuclease activity. During DNA replication, flap endonucleases cleave the 5'-overhanging flap structure that is generated by displacement synthesis when DNA polymerase encounters the 5'-end of a downstream Okazaki fragment. The sequence is that of Flap endonuclease Xni from Vibrio vulnificus (strain YJ016).